A 285-amino-acid chain; its full sequence is Aquaporin PIP2-5 (285 aa).

Transmembrane regions (helical) follow at residues 38–58 (AVIA…ATVI) and 75–95 (CGGV…FILV). Positions 107–109 (NPA) match the NPA 1 motif. The next 3 helical transmembrane spans lie at 126 to 146 (LLYI…VKGF), 168 to 188 (GTGL…VFSA), and 202 to 222 (VLAP…TIPI). The NPA 2 signature appears at 228–230 (NPA). A helical membrane pass occupies residues 250–270 (IFWVGPFIGAAIAAAYHQYVL).

This sequence belongs to the MIP/aquaporin (TC 1.A.8) family. PIP (TC 1.A.8.11) subfamily. As to quaternary structure, homomers. May interact with PIP1-2 to form heteromers. In terms of tissue distribution, specifically expressed in roots, in the exodermis, endodermis and xylem parenchyma. Polar localization to the external periclinal side of epidermal cells in root apices.

Its subcellular location is the cell membrane. In terms of biological role, water channel required to facilitate the transport of water across cell membrane. Its function is impaired by Hg(2+). May play a role in water uptake from the root surface. Active as homomers. Increased activity when heteromerization with PIP1-2. In Zea mays (Maize), this protein is Aquaporin PIP2-5 (PIP2-5).